Reading from the N-terminus, the 379-residue chain is Putative cyclic ADP-D-ribose synthase TIR2 (379 aa).

One can recognise a TIR domain in the interval 254 to 379 (KVYDVFISHS…TISWTTGLVK (126 aa)). Glu335 is a catalytic residue.

Homodimer.

It localises to the cytoplasm. Activated upon phage infection. Functionally, one of 2 TIR-like protein components of the Thoeris antiviral defense system, composed of ThsA, TIR1 (thsB1) and TIR2 (thsB2). Phage infection activates this protein; by 70 minutes post-infection with phage SPO1, TIR2 generates a signal molecule that in turn activates the NAD(+) hydrolase activity of ThsA (tested with B.cereus). The signal is similar to cyclic ADP-D-ribose, but how it differs is unknown. Expression of Thoeris in B.subtilis (strain BEST7003) confers resistance to phages phi29, phi3T, SPBeta, SBSphi11, SBSphi13, SBSphiJ, SPO1 and SPR but not SBSphiC. The TIR paralogs confer resistance to different phages; this subunit confers resistance to phi3T, SPBeta, SBSphi13, SBSphiJ, SPO1 and SPR but not phi29, SBSphi11 or SBSphiC. There is overlap in the phage range for this system, both TIR1 and TIR2 are activated by SBSphi13, SBSphiJ, SPO1 and SPR. Probably hydrolyzes NAD(+) to make a cyclic ADP-D-ribose (cADPR) signaling molecule; might make 3'cADPR. In Cytobacillus dafuensis (Bacillus dafuensis), this protein is Putative cyclic ADP-D-ribose synthase TIR2.